The following is a 204-amino-acid chain: MLEIRNVTCIRDERVLFERLNFTISDGELIQIEGQNGAGKTTLLRIIAGLGYADEGDIFWKNESIKQNREEFHSDLLFLGHHTGVKRELTAFENLAFYQSMHDNYNEAAIWDALARVGLAGREDVAAGQLSAGQQRRVALARLWLSNHKLWILDEPLTAIDKQGVKVLEKLFMDHAKQGGIVLLTTHQDLFIDSNELKKIRLGE.

In terms of domain architecture, ABC transporter spans 2–202; sequence LEIRNVTCIR…DSNELKKIRL (201 aa). 34 to 41 serves as a coordination point for ATP; the sequence is GQNGAGKT.

The protein belongs to the ABC transporter superfamily. CcmA exporter (TC 3.A.1.107) family. The complex is composed of two ATP-binding proteins (CcmA) and two transmembrane proteins (CcmB).

The protein resides in the cell inner membrane. The enzyme catalyses heme b(in) + ATP + H2O = heme b(out) + ADP + phosphate + H(+). In terms of biological role, part of the ABC transporter complex CcmAB involved in the biogenesis of c-type cytochromes; once thought to export heme, this seems not to be the case, but its exact role is uncertain. Responsible for energy coupling to the transport system. The polypeptide is Cytochrome c biogenesis ATP-binding export protein CcmA (Aliivibrio fischeri (strain ATCC 700601 / ES114) (Vibrio fischeri)).